A 184-amino-acid chain; its full sequence is GTP-binding protein Rheb (184 aa).

A Glycyl lysine isopeptide (Lys-Gly) (interchain with G-Cter in ubiquitin) cross-link involves residue lysine 8. Serine 16, valine 17, glycine 18, lysine 19, serine 20, serine 21, valine 32, and aspartate 33 together coordinate GDP. Positions 16, 17, 18, 19, 20, 21, 32, 33, 35, 37, 38, 63, 119, 120, and 122 each coordinate GTP. Serine 20 is a Mg(2+) binding site. The short motif at 35-43 (YDPTIENTF) is the Effector region element. A Mg(2+)-binding site is contributed by threonine 38. Asparagine 119 contacts GDP. Aspartate 122 is a GDP binding site. The residue at position 130 (serine 130) is a Phosphoserine; by MAPKAPK5. Alanine 150 provides a ligand contact to GDP. Alanine 150 contributes to the GTP binding site. Cysteine 181 carries the cysteine methyl ester modification. Cysteine 181 carries S-farnesyl cysteine lipidation. Residues 182 to 184 (SVM) constitute a propeptide, removed in mature form.

Belongs to the small GTPase superfamily. Rheb family. In terms of assembly, associates with the mTORC1 complex (MTOR, MLST8 and RPTOR) in a guanyl nucleotide-independent manner. Interacts with TSC2. Interacts with MCRS1; the interaction maintains RHEB at the lysosome in its active GTP-bound form and prevents its interaction with the mTORC1 complex inhibitor TSC2, ensuring activation of the mTORC1 complex by RHEB. Interacts (when prenylated) with PDE6D; this promotes release from membranes. In terms of processing, farnesylation is important for efficiently activating mTORC1-mediated signaling. Post-translationally, polyubiquitinated in response to amino acid, promoting its interaction with MTOR and mTORC1 activation. Deubiquitination by ATXN3 promotes recruitment of the TSC-TBC complex and RHEB inactivation by TSC2. Monoubiquitinated at Lys-8 by RNF152, promoting its association with the TSC-TBC complex. Deubiquitinated at Lys-8 by USP4, promoting mTORC1 activation. Phosphorylation by MAPKAPK5 impairs GTP-binding and inactivation.

The protein resides in the endomembrane system. The protein localises to the lysosome membrane. It is found in the golgi apparatus membrane. Its subcellular location is the endoplasmic reticulum membrane. It localises to the cytoplasm. The protein resides in the cytosol. It catalyses the reaction GTP + H2O = GDP + phosphate + H(+). Alternates between an inactive form bound to GDP and an active form bound to GTP. Inactivated by the TSC-TBC complex via the GTPase activating protein (GAP) domain of TSC2. Autoinhibited by Tyr-35, which constrains the active site conformation, restricting the access of the catalytic Asp-65 to the nucleotide-binding pocket. Its function is as follows. Small GTPase that acts as an allosteric activator of the canonical mTORC1 complex, an evolutionarily conserved central nutrient sensor that stimulates anabolic reactions and macromolecule biosynthesis to promote cellular biomass generation and growth. In response to nutrients, growth factors or amino acids, specifically activates the protein kinase activity of MTOR, the catalytic component of the mTORC1 complex: acts by causing a conformational change that allows the alignment of residues in the active site of MTOR, thereby enhancing the phosphorylation of ribosomal protein S6 kinase (RPS6KB1 and RPS6KB2) and EIF4EBP1 (4E-BP1). RHEB is also required for localization of the TSC-TBC complex to lysosomal membranes. In response to starvation, RHEB is inactivated by the TSC-TBC complex, preventing activation of mTORC1. Has low intrinsic GTPase activity. This Mus musculus (Mouse) protein is GTP-binding protein Rheb.